We begin with the raw amino-acid sequence, 549 residues long: Chaperonin GroEL (549 aa).

Residues 30-33 (TLGP), lysine 51, 87-91 (DGTTT), glycine 415, and aspartate 495 each bind ATP.

The protein belongs to the chaperonin (HSP60) family. Forms a cylinder of 14 subunits composed of two heptameric rings stacked back-to-back. Interacts with the co-chaperonin GroES.

Its subcellular location is the cytoplasm. It catalyses the reaction ATP + H2O + a folded polypeptide = ADP + phosphate + an unfolded polypeptide.. Functionally, together with its co-chaperonin GroES, plays an essential role in assisting protein folding. The GroEL-GroES system forms a nano-cage that allows encapsulation of the non-native substrate proteins and provides a physical environment optimized to promote and accelerate protein folding. In Colwellia maris, this protein is Chaperonin GroEL.